The following is a 594-amino-acid chain: Phostensin (594 aa).

2 stretches are compositionally biased toward basic and acidic residues: residues 18 to 33 (EEAA…RDRL) and 109 to 125 (VLGD…ERRS). 2 disordered regions span residues 18–238 (EEAA…PTDV) and 294–485 (VQDI…GKKR). Phosphoserine occurs at positions 126, 134, 174, and 194. 2 stretches are compositionally biased toward basic and acidic residues: residues 133–155 (QSPK…DRRL) and 167–190 (SLRD…EAQK). Threonine 198 carries the phosphothreonine modification. The residue at position 224 (serine 224) is a Phosphoserine. A compositionally biased stretch (acidic residues) spans 353-364 (EAEEEAEKEEAE). A compositionally biased stretch (pro residues) spans 403–421 (PRPPTPAPLSPPPSAPTAP). Position 412 is a phosphoserine (serine 412). Lysine 437 carries the N6-acetyllysine modification. Position 510 is a phosphoserine (serine 510). Residues 531–577 (YQYPSESSVLEDLGPEPETPIAPLATQPDEEEEEEEEEEELLLQPGL) are disordered. Over residues 558–571 (PDEEEEEEEEEEEL) the composition is skewed to acidic residues.

Interacts with Protein phosphatase 1 (PP1).

It localises to the cytoplasm. Its subcellular location is the cytoskeleton. In terms of biological role, may target protein phosphatase 1 to F-actin cytoskeleton. The polypeptide is Phostensin (Ppp1r18) (Mus musculus (Mouse)).